Reading from the N-terminus, the 328-residue chain is DNA-directed RNA polymerase subunit alpha (328 aa).

The alpha N-terminal domain (alpha-NTD) stretch occupies residues 1–234 (MQNSTTEFLK…DQMSIFADLQ (234 aa)). An alpha C-terminal domain (alpha-CTD) region spans residues 248–328 (IDPVLLRPVD…AWPPVGLEKP (81 aa)).

The protein belongs to the RNA polymerase alpha chain family. In terms of assembly, homodimer. The RNAP catalytic core consists of 2 alpha, 1 beta, 1 beta' and 1 omega subunit. When a sigma factor is associated with the core the holoenzyme is formed, which can initiate transcription.

The catalysed reaction is RNA(n) + a ribonucleoside 5'-triphosphate = RNA(n+1) + diphosphate. In terms of biological role, DNA-dependent RNA polymerase catalyzes the transcription of DNA into RNA using the four ribonucleoside triphosphates as substrates. The chain is DNA-directed RNA polymerase subunit alpha from Neisseria meningitidis serogroup A / serotype 4A (strain DSM 15465 / Z2491).